The primary structure comprises 302 residues: D-alanine--D-alanine ligase (302 aa).

The region spanning 99–298 (KRLFVAEGIP…FEQLIQRIID (200 aa)) is the ATP-grasp domain. ATP is bound at residue 128–183 (LAALGSPVVVKPADGGSTVGVTIAREAGHLPEAVRLALQYSPQVLIEQYIPGQEIT). Residues Asp252, Glu265, and Asn267 each contribute to the Mg(2+) site.

This sequence belongs to the D-alanine--D-alanine ligase family. Requires Mg(2+) as cofactor. It depends on Mn(2+) as a cofactor.

The protein resides in the cytoplasm. It carries out the reaction 2 D-alanine + ATP = D-alanyl-D-alanine + ADP + phosphate + H(+). It functions in the pathway cell wall biogenesis; peptidoglycan biosynthesis. Functionally, cell wall formation. The chain is D-alanine--D-alanine ligase from Gloeobacter violaceus (strain ATCC 29082 / PCC 7421).